The primary structure comprises 223 residues: Pyridoxine/pyridoxamine 5'-phosphate oxidase (223 aa).

Residues 9–12 and K76 contribute to the substrate site; that span reads RVGY. Residues 71-76, 86-87, K93, and Q115 each bind FMN; these read RTVLCK and FT. Substrate-binding residues include Y133, R137, and S141. Residues 150-151 and W196 contribute to the FMN site; that span reads QS. Residue 202–204 coordinates substrate; it reads RMH. Residue R206 coordinates FMN.

This sequence belongs to the pyridoxamine 5'-phosphate oxidase family. In terms of assembly, homodimer. FMN serves as cofactor.

It carries out the reaction pyridoxamine 5'-phosphate + O2 + H2O = pyridoxal 5'-phosphate + H2O2 + NH4(+). The catalysed reaction is pyridoxine 5'-phosphate + O2 = pyridoxal 5'-phosphate + H2O2. It participates in cofactor metabolism; pyridoxal 5'-phosphate salvage; pyridoxal 5'-phosphate from pyridoxamine 5'-phosphate: step 1/1. Its pathway is cofactor metabolism; pyridoxal 5'-phosphate salvage; pyridoxal 5'-phosphate from pyridoxine 5'-phosphate: step 1/1. Catalyzes the oxidation of either pyridoxine 5'-phosphate (PNP) or pyridoxamine 5'-phosphate (PMP) into pyridoxal 5'-phosphate (PLP). The sequence is that of Pyridoxine/pyridoxamine 5'-phosphate oxidase from Rhodococcus jostii (strain RHA1).